Here is a 165-residue protein sequence, read N- to C-terminus: Copper-resistant cuproprotein CopI (165 aa).

Residues Met-1 to Ala-23 form the signal peptide. Over residues Ala-25 to Asp-42 the composition is skewed to basic and acidic residues. Residues Ala-25 to Asp-50 form a disordered region. Residues His-93, Cys-148, His-153, and Met-158 each contribute to the Cu(2+) site.

It belongs to the CopI family. As to quaternary structure, monomer.

It localises to the periplasm. Involved in copper tolerance. Required for copper resistance under both aerobic and anaerobic photosynthetic growth conditions. Binds copper. Could be an important defense against copper in the periplasm and may protect not only c type cytochromes but also other proteins with cysteine residues from copper ions that may catalyze nonnative disulfide bond formation. This is Copper-resistant cuproprotein CopI from Rubrivivax gelatinosus (Rhodocyclus gelatinosus).